A 159-amino-acid chain; its full sequence is Putative pre-16S rRNA nuclease (159 aa).

This sequence belongs to the YqgF nuclease family.

The protein resides in the cytoplasm. Functionally, could be a nuclease involved in processing of the 5'-end of pre-16S rRNA. The chain is Putative pre-16S rRNA nuclease from Bartonella henselae (strain ATCC 49882 / DSM 28221 / CCUG 30454 / Houston 1) (Rochalimaea henselae).